The chain runs to 23 residues: Cysteine-rich venom protein 24 (23 aa).

The segment at valine 1–leucine 23 is disordered. Residues residue 8–leucine 23 show a composition bias toward basic and acidic residues.

The protein belongs to the CRISP family. In terms of processing, contains 8 disulfide bonds. Expressed by the venom gland.

It is found in the secreted. This is Cysteine-rich venom protein 24 from Naja kaouthia (Monocled cobra).